The following is a 314-amino-acid chain: Methionyl-tRNA formyltransferase (314 aa).

(6S)-5,6,7,8-tetrahydrofolate is bound at residue 112-115 (SLLP).

This sequence belongs to the Fmt family.

It carries out the reaction L-methionyl-tRNA(fMet) + (6R)-10-formyltetrahydrofolate = N-formyl-L-methionyl-tRNA(fMet) + (6S)-5,6,7,8-tetrahydrofolate + H(+). Attaches a formyl group to the free amino group of methionyl-tRNA(fMet). The formyl group appears to play a dual role in the initiator identity of N-formylmethionyl-tRNA by promoting its recognition by IF2 and preventing the misappropriation of this tRNA by the elongation apparatus. This is Methionyl-tRNA formyltransferase from Legionella pneumophila (strain Paris).